Consider the following 249-residue polypeptide: Indole-3-glycerol phosphate synthase (249 aa).

It belongs to the TrpC family.

The catalysed reaction is 1-(2-carboxyphenylamino)-1-deoxy-D-ribulose 5-phosphate + H(+) = (1S,2R)-1-C-(indol-3-yl)glycerol 3-phosphate + CO2 + H2O. Its pathway is amino-acid biosynthesis; L-tryptophan biosynthesis; L-tryptophan from chorismate: step 4/5. In Pyrobaculum aerophilum (strain ATCC 51768 / DSM 7523 / JCM 9630 / CIP 104966 / NBRC 100827 / IM2), this protein is Indole-3-glycerol phosphate synthase.